A 150-amino-acid polypeptide reads, in one-letter code: Sulfur-rich protein, serovars L1/L3 (150 aa).

The interval Met1–Ser20 is disordered. A run of 2 helical transmembrane segments spans residues Val43–Ala63 and Ile69–Met89.

Its subcellular location is the membrane. The polypeptide is Sulfur-rich protein, serovars L1/L3 (srp) (Chlamydia trachomatis).